The primary structure comprises 860 residues: Tetratricopeptide repeat protein 13 (860 aa).

TPR repeat units follow at residues threonine 143–leucine 176, proline 216–serine 248, alanine 249–glutamine 282, isoleucine 284–phenylalanine 316, isoleucine 317–histidine 350, glutamine 352–asparagine 384, and valine 386–proline 418.

The polypeptide is Tetratricopeptide repeat protein 13 (TTC13) (Homo sapiens (Human)).